Reading from the N-terminus, the 392-residue chain is Stilbene synthase 5 (392 aa).

Substrate is bound at residue 55-58; the sequence is KFNR. Residue C164 is part of the active site. Residues L267 and 305–307 contribute to the substrate site; that span reads GGP.

This sequence belongs to the thiolase-like superfamily. Chalcone/stilbene synthases family. Homodimer.

The protein resides in the cytoplasm. The catalysed reaction is 4-coumaroyl-CoA + 3 malonyl-CoA + 3 H(+) = trans-resveratrol + 4 CO2 + 4 CoA. The protein operates within phytoalexin biosynthesis; 3,4',5-trihydroxystilbene biosynthesis; 3,4',5-trihydroxystilbene from trans-4-coumarate: step 2/2. Functionally, mediates resistance to pathogens which are sensitive to stilbenes. The chain is Stilbene synthase 5 from Vitis vinifera (Grape).